The primary structure comprises 511 residues: Colicin-B (511 aa).

The TonB box signature appears at 17 to 24 (DTMVVWPS). Transmembrane regions (helical) follow at residues 455–475 (MASAVALSLFSLTLGSALIAF) and 477–497 (LSATVVGFVGVVIAGAIGAFI).

Belongs to the channel forming colicin family.

The protein localises to the cell membrane. In terms of biological role, this colicin is a channel-forming colicin. This class of transmembrane toxins depolarize the cytoplasmic membrane, leading to dissipation of cellular energy. Colicins are polypeptide toxins produced by and active against E.coli and closely related bacteria. The protein is Colicin-B (cba) of Escherichia coli.